The chain runs to 282 residues: 2-dehydro-3-deoxyphosphooctonate aldolase (282 aa).

The protein belongs to the KdsA family.

It is found in the cytoplasm. It catalyses the reaction D-arabinose 5-phosphate + phosphoenolpyruvate + H2O = 3-deoxy-alpha-D-manno-2-octulosonate-8-phosphate + phosphate. It functions in the pathway carbohydrate biosynthesis; 3-deoxy-D-manno-octulosonate biosynthesis; 3-deoxy-D-manno-octulosonate from D-ribulose 5-phosphate: step 2/3. The protein operates within bacterial outer membrane biogenesis; lipopolysaccharide biosynthesis. In Shewanella sp. (strain ANA-3), this protein is 2-dehydro-3-deoxyphosphooctonate aldolase.